Consider the following 428-residue polypeptide: Enolase (428 aa).

Gln-163 contacts (2R)-2-phosphoglycerate. The active-site Proton donor is Glu-205. Residues Asp-242, Glu-285, and Asp-312 each coordinate Mg(2+). Lys-337, Arg-366, Ser-367, and Lys-388 together coordinate (2R)-2-phosphoglycerate. Lys-337 acts as the Proton acceptor in catalysis.

The protein belongs to the enolase family. Mg(2+) serves as cofactor.

It is found in the cytoplasm. Its subcellular location is the secreted. It localises to the cell surface. It catalyses the reaction (2R)-2-phosphoglycerate = phosphoenolpyruvate + H2O. The protein operates within carbohydrate degradation; glycolysis; pyruvate from D-glyceraldehyde 3-phosphate: step 4/5. Catalyzes the reversible conversion of 2-phosphoglycerate (2-PG) into phosphoenolpyruvate (PEP). It is essential for the degradation of carbohydrates via glycolysis. The chain is Enolase from Persephonella marina (strain DSM 14350 / EX-H1).